The sequence spans 130 residues: Hypocretin neuropeptide precursor (130 aa).

Residues 1 to 32 form the signal peptide; the sequence is MNPPSTKVPWAAVTLLLLLLLPPALLSPGAAA. Glutamine 33 carries the pyrrolidone carboxylic acid modification. 2 disulfide bridges follow: cysteine 38–cysteine 44 and cysteine 39–cysteine 46. Leucine amide is present on leucine 65. Methionine 96 is subject to Methionine amide. A propeptide spans 97–130 (removed in mature form); sequence GRRAGAEPAPRPCPGRRCPVVAVPSAAPGGRSGV.

This sequence belongs to the orexin family. In terms of processing, specific enzymatic cleavages at paired basic residues yield the different active peptides.

The protein resides in the rough endoplasmic reticulum. Its subcellular location is the cytoplasmic vesicle. It is found in the synapse. Its function is as follows. Neuropeptides that play a significant role in the regulation of food intake and sleep-wakefulness, possibly by coordinating the complex behavioral and physiologic responses of these complementary homeostatic functions. A broader role in the homeostatic regulation of energy metabolism, autonomic function, hormonal balance and the regulation of body fluids, is also suggested. In terms of biological role, binds to orexin receptors HCRTR1/OX1R and HCRTR2/OX2R with a high affinity. Stimulates food intake. Modulates pituitary luteinizing hormone secretion in an ovarian steroid-dependent manner. Binds to orexin receptor HCRTR2/OX2R only. Stimulates food intake. Modulates pituitary luteinizing hormone secretion in an ovarian steroid-dependent manner. The protein is Hypocretin neuropeptide precursor (HCRT) of Canis lupus familiaris (Dog).